The sequence spans 116 residues: Large ribosomal subunit protein bL19 (116 aa).

The protein belongs to the bacterial ribosomal protein bL19 family.

In terms of biological role, this protein is located at the 30S-50S ribosomal subunit interface and may play a role in the structure and function of the aminoacyl-tRNA binding site. In Fusobacterium nucleatum subsp. nucleatum (strain ATCC 25586 / DSM 15643 / BCRC 10681 / CIP 101130 / JCM 8532 / KCTC 2640 / LMG 13131 / VPI 4355), this protein is Large ribosomal subunit protein bL19.